Consider the following 227-residue polypeptide: Uridylate kinase (227 aa).

6–10 (KVSGK) contacts ATP. Gly-43 contributes to the UMP binding site. 2 residues coordinate ATP: Gly-44 and Arg-48. UMP contacts are provided by residues Asp-65 and 113–119 (FQPGQST). Residues Thr-139, Asn-140, Tyr-145, and Asp-148 each contribute to the ATP site.

Belongs to the UMP kinase family. As to quaternary structure, homohexamer.

The protein localises to the cytoplasm. It catalyses the reaction UMP + ATP = UDP + ADP. The protein operates within pyrimidine metabolism; CTP biosynthesis via de novo pathway; UDP from UMP (UMPK route): step 1/1. Inhibited by UTP. Its function is as follows. Catalyzes the reversible phosphorylation of UMP to UDP. The protein is Uridylate kinase of Sulfolobus acidocaldarius (strain ATCC 33909 / DSM 639 / JCM 8929 / NBRC 15157 / NCIMB 11770).